The sequence spans 342 residues: Phenylalanine--tRNA ligase alpha subunit (342 aa).

Mg(2+) is bound at residue E257.

This sequence belongs to the class-II aminoacyl-tRNA synthetase family. Phe-tRNA synthetase alpha subunit type 1 subfamily. As to quaternary structure, tetramer of two alpha and two beta subunits. It depends on Mg(2+) as a cofactor.

The protein localises to the cytoplasm. The enzyme catalyses tRNA(Phe) + L-phenylalanine + ATP = L-phenylalanyl-tRNA(Phe) + AMP + diphosphate + H(+). In Chlamydia trachomatis serovar D (strain ATCC VR-885 / DSM 19411 / UW-3/Cx), this protein is Phenylalanine--tRNA ligase alpha subunit (pheS).